The primary structure comprises 402 residues: 2,3-bisphosphoglycerate-independent phosphoglycerate mutase (402 aa).

The tract at residues 155 to 174 (SMVSDSDPHRENERPMEVRP) is disordered. Residues 160-174 (SDPHRENERPMEVRP) are compositionally biased toward basic and acidic residues.

It belongs to the BPG-independent phosphoglycerate mutase family. A-PGAM subfamily.

The enzyme catalyses (2R)-2-phosphoglycerate = (2R)-3-phosphoglycerate. It participates in carbohydrate degradation; glycolysis; pyruvate from D-glyceraldehyde 3-phosphate: step 3/5. Its function is as follows. Catalyzes the interconversion of 2-phosphoglycerate and 3-phosphoglycerate. The polypeptide is 2,3-bisphosphoglycerate-independent phosphoglycerate mutase (Picrophilus torridus (strain ATCC 700027 / DSM 9790 / JCM 10055 / NBRC 100828 / KAW 2/3)).